Reading from the N-terminus, the 289-residue chain is Light-independent protochlorophyllide reductase iron-sulfur ATP-binding protein (289 aa).

ATP-binding positions include 10–15 and Lys39; that span reads GIGKST. A Mg(2+)-binding site is contributed by Ser14. Cys95 and Cys129 together coordinate [4Fe-4S] cluster. 180 to 181 contacts ATP; that stretch reads NR.

It belongs to the NifH/BchL/ChlL family. In terms of assembly, homodimer. Protochlorophyllide reductase is composed of three subunits; ChlL, ChlN and ChlB. Requires [4Fe-4S] cluster as cofactor.

It is found in the plastid. The protein resides in the chloroplast. The enzyme catalyses chlorophyllide a + oxidized 2[4Fe-4S]-[ferredoxin] + 2 ADP + 2 phosphate = protochlorophyllide a + reduced 2[4Fe-4S]-[ferredoxin] + 2 ATP + 2 H2O. Its pathway is porphyrin-containing compound metabolism; chlorophyll biosynthesis (light-independent). In terms of biological role, component of the dark-operative protochlorophyllide reductase (DPOR) that uses Mg-ATP and reduced ferredoxin to reduce ring D of protochlorophyllide (Pchlide) to form chlorophyllide a (Chlide). This reaction is light-independent. The L component serves as a unique electron donor to the NB-component of the complex, and binds Mg-ATP. The chain is Light-independent protochlorophyllide reductase iron-sulfur ATP-binding protein from Tetradesmus obliquus (Green alga).